A 108-amino-acid polypeptide reads, in one-letter code: Thioredoxin (108 aa).

The 107-residue stretch at 2-108 folds into the Thioredoxin domain; the sequence is SDAILYVSDD…QLTAFLDSQL (107 aa). A disulfide bond links cysteine 33 and cysteine 36.

The protein belongs to the thioredoxin family.

Functionally, component of the thioredoxin-thioredoxin reductase system. Participates in various redox reactions through the reversible oxidation of its active center dithiol to a disulfide and catalyzes dithiol-disulfide exchange reactions. In Acidithiobacillus ferridurans, this protein is Thioredoxin (trxA).